Here is a 91-residue protein sequence, read N- to C-terminus: Small ribosomal subunit protein uS19 (91 aa).

This sequence belongs to the universal ribosomal protein uS19 family.

Its function is as follows. Protein S19 forms a complex with S13 that binds strongly to the 16S ribosomal RNA. This Prochlorococcus marinus (strain NATL1A) protein is Small ribosomal subunit protein uS19.